The primary structure comprises 697 residues: U-box domain-containing protein 18 (697 aa).

A U-box N-terminal domain (UND) required for EXO70B1 binding and crucial for the negative regulation of ABA-dependent stomatal movement region spans residues 23–210; that stretch reads SISIVTLLDS…INRILDHVGI (188 aa). A U-box domain is found at 287–361; the sequence is LKVEDLLCPI…RKHCKTNGIV (75 aa). ARM repeat units follow at residues 420-459, 461-500, 502-544, 546-587, 589-631, and 657-696; these read SFNR…NLSK, VTGK…YLSS, EDYS…GLLM, SDNH…KLAE, PDGT…NLCL, and NGEY…FVHA.

As to quaternary structure, interacts with EXO70B1 via its U-box N-terminal domain (UND).

Its subcellular location is the endomembrane system. It carries out the reaction S-ubiquitinyl-[E2 ubiquitin-conjugating enzyme]-L-cysteine + [acceptor protein]-L-lysine = [E2 ubiquitin-conjugating enzyme]-L-cysteine + N(6)-ubiquitinyl-[acceptor protein]-L-lysine.. It participates in protein modification; protein ubiquitination. In terms of biological role, functions as an E3 ubiquitin ligase. Mediates EXO70B1 ubiquitination. Involved in the regulation of abscisic acid (ABA)-mediated stomatal movements. The chain is U-box domain-containing protein 18 from Arabidopsis thaliana (Mouse-ear cress).